Reading from the N-terminus, the 474-residue chain is Ribulose bisphosphate carboxylase large chain (474 aa).

Proline 2 is modified (N-acetylproline). Lysine 13 is subject to N6,N6,N6-trimethyllysine. Substrate is bound by residues asparagine 122 and threonine 172. Lysine 174 functions as the Proton acceptor in the catalytic mechanism. Lysine 176 is a binding site for substrate. 3 residues coordinate Mg(2+): lysine 200, aspartate 202, and glutamate 203. Position 200 is an N6-carboxylysine (lysine 200). Catalysis depends on histidine 293, which acts as the Proton acceptor. 3 residues coordinate substrate: arginine 294, histidine 326, and serine 378.

The protein belongs to the RuBisCO large chain family. Type I subfamily. Heterohexadecamer of 8 large chains and 8 small chains; disulfide-linked. The disulfide link is formed within the large subunit homodimers. Mg(2+) is required as a cofactor. The disulfide bond which can form in the large chain dimeric partners within the hexadecamer appears to be associated with oxidative stress and protein turnover.

It localises to the plastid. Its subcellular location is the chloroplast. The enzyme catalyses 2 (2R)-3-phosphoglycerate + 2 H(+) = D-ribulose 1,5-bisphosphate + CO2 + H2O. It carries out the reaction D-ribulose 1,5-bisphosphate + O2 = 2-phosphoglycolate + (2R)-3-phosphoglycerate + 2 H(+). RuBisCO catalyzes two reactions: the carboxylation of D-ribulose 1,5-bisphosphate, the primary event in carbon dioxide fixation, as well as the oxidative fragmentation of the pentose substrate in the photorespiration process. Both reactions occur simultaneously and in competition at the same active site. This Oltmannsiellopsis viridis (Marine flagellate) protein is Ribulose bisphosphate carboxylase large chain.